A 537-amino-acid chain; its full sequence is Leucine-rich repeat LGI family member 4 (537 aa).

Positions 1-19 (MGGAGILLLLLAGAGVVVA) are cleaved as a signal peptide. LRR repeat units lie at residues 53-74 (TLLS…SFLR), 77-98 (SLHL…AFAG), 101-122 (HLQY…ALRG), and 125-146 (SLTH…LFRG). Residues 158-208 (NPFQCDCRVLWLLQWMPTVNASVGTGACAGPASLSHMQLHHLDPKTFKCRA) form the LRRCT domain. Residue N177 is glycosylated (N-linked (GlcNAc...) asparagine). EAR repeat units follow at residues 210–252 (ELSW…SWDY), 256–298 (RFRP…ARPS), 302–349 (RLAP…CRDG), 351–394 (GFYP…HWTG), 396–439 (RFER…RWDG), 441–483 (MFRL…RLEP), and 487–532 (LLEP…QHHE).

As to quaternary structure, can bind to ADAM11, ADAM22 and ADAM23. As to expression, widely expressed, with highest expression in brain.

Its subcellular location is the secreted. Its function is as follows. Component of Schwann cell signaling pathway(s) that controls axon segregation and myelin formation. The polypeptide is Leucine-rich repeat LGI family member 4 (LGI4) (Homo sapiens (Human)).